Consider the following 622-residue polypeptide: UvrABC system protein C (622 aa).

One can recognise a GIY-YIG domain in the interval 13-92; the sequence is DKPGVYLMKN…IKENRPKYNV (80 aa). Residues 205–240 form the UVR domain; that stretch reads DELIKKIEEKMKRAAEKMDFEGAAHYRDQRQALLDI.

It belongs to the UvrC family. Interacts with UvrB in an incision complex.

The protein resides in the cytoplasm. Its function is as follows. The UvrABC repair system catalyzes the recognition and processing of DNA lesions. UvrC both incises the 5' and 3' sides of the lesion. The N-terminal half is responsible for the 3' incision and the C-terminal half is responsible for the 5' incision. This chain is UvrABC system protein C, found in Alkaliphilus metalliredigens (strain QYMF).